Consider the following 153-residue polypeptide: Pheromone-binding protein Gp-9 (153 aa).

Positions 1 to 19 are cleaved as a signal peptide; sequence MKTFVLHIFIFALVAFASA. 3 cysteine pairs are disulfide-bonded: C37-C77, C73-C129, and C118-C138.

It belongs to the PBP/GOBP family. As to quaternary structure, homodimer.

It is found in the secreted. Functionally, colony queen number, a major feature of social organization, is associated with worker genotype for Gp-9. Colonies are headed by either a single reproductive queen (monogyne form) or multiple queens (polygyne form). Differences in worker Gp-9 genotypes between social forms may cause differences in workers' abilities to recognize queens and regulate their numbers. This Solenopsis n. sp. (strain JP-2002) (Fire ant) protein is Pheromone-binding protein Gp-9.